We begin with the raw amino-acid sequence, 488 residues long: MINRQLSRLLLCSILGSTTLISGCALVRKDSAPHQQLKPEQIKLADDIHLASSGWPQAQWWKQLNDPQLDALIQRTLSGSHTLAEAKLREEKAQSQADLLDAGSQLQVAALGMLNRQRVSANGFLSPYSMDAPALGMDGPYYTEATVGLFAGLDLDLWGVHRSAVAAAIGAHNAALAETAAVELSLATGVAQLYYSMQASYQMLDLLEQTHDVIDYAVKAHQSKVAHGLEAQVPFHGARAQILAVDKQIVAVKGQITETRESLRALIGAGASDMPEIRPVALPQVQTGIPATLSYELLARRPDLQAMRWYVQASLDQVDSARALFYPSFDIKAFFGLDSIHLHTLFKKTSRQFNFIPGLKLPLFDGGRLNANLEGTRAASNMMIERYNQSVLNAVRDVAVNGTRLQTLNDEREMQAERVEATRFTQRAAEAAYQRGLTSRLQATEARLPVLAEEMSLLMLDSRRVIQSIQLMKSLGGGYQAGPVVEKK.

An N-terminal signal peptide occupies residues Met-1 to Gly-23. Cys-24 carries the N-palmitoyl cysteine lipid modification. The S-diacylglycerol cysteine moiety is linked to residue Cys-24.

The protein belongs to the outer membrane factor (OMF) (TC 1.B.17) family. As to quaternary structure, could be part of a tripartite efflux system composed of MdtN, MdtO and MdtP.

The protein resides in the cell outer membrane. In terms of biological role, could be involved in resistance to puromycin, acriflavine and tetraphenylarsonium chloride. The sequence is that of Multidrug resistance outer membrane protein MdtP (mdtP) from Escherichia coli (strain K12).